The primary structure comprises 344 residues: Lipase chaperone (344 aa).

Residues 14 to 34 form a helical membrane-spanning segment; it reads AMVYGVVGLAAIAGVAMWSGA.

This sequence belongs to the lipase chaperone family.

The protein resides in the cell inner membrane. In terms of biological role, may be involved in the folding of the extracellular lipase during its passage through the periplasm. This chain is Lipase chaperone, found in Burkholderia lata (strain ATCC 17760 / DSM 23089 / LMG 22485 / NCIMB 9086 / R18194 / 383).